A 211-amino-acid polypeptide reads, in one-letter code: Claudin-1 (211 aa).

Residues 1–7 (MANAGLQ) are Cytoplasmic-facing. Residues 8-28 (LLGFILASLGWIGSIVSTALP) traverse the membrane as a helical segment. Over 29 to 81 (QWKIYSYAGDNIVTAQAIYEGLWMSCVSQSTGQIQCKVFDSLLNLNSTLQATR) the chain is Extracellular. Cysteine 54 and cysteine 64 are joined by a disulfide. Residues 82-102 (ALMVIGILLGLIAIFVSTIGM) form a helical membrane-spanning segment. Over 103-115 (KCMRCLEDDEVQK) the chain is Cytoplasmic. Residues 116-136 (MWMAVIGGIIFVISGLATLVA) form a helical membrane-spanning segment. Topologically, residues 137 to 163 (TAWYGNRIVQEFYDPMTPVNARYEFGQ) are extracellular. A helical transmembrane segment spans residues 164–184 (ALFTGWAAASLCLLGGALLSC). The Cytoplasmic portion of the chain corresponds to 185–211 (SCPRKTTSYPTPRPYPKPTPSSGKDYV). Residues 190–211 (TTSYPTPRPYPKPTPSSGKDYV) form a disordered region. The interval 210-211 (YV) is interactions with TJP1, TJP2, TJP3 and PATJ.

This sequence belongs to the claudin family. In terms of assembly, can form homo- and heteropolymers with other CLDN. Homopolymers interact with CLDN3, but not CLDN2, homopolymers. Directly interacts with TJP1/ZO-1, TJP2/ZO-2 and TJP3/ZO-3. Interacts with MPDZ and PATJ. Interacts with OCLN, CD81, CLDN4, CLDN6 and CLDN9. As to expression, detected in epididymis (at protein level). Detected in testis and epididymis.

It is found in the cell junction. It localises to the tight junction. The protein localises to the cell membrane. The protein resides in the basolateral cell membrane. Claudins function as major constituents of the tight junction complexes that regulate the permeability of epithelia. While some claudin family members play essential roles in the formation of impermeable barriers, others mediate the permeability to ions and small molecules. Often, several claudin family members are coexpressed and interact with each other, and this determines the overall permeability. CLDN1 is required to prevent the paracellular diffusion of small molecules through tight junctions in the epidermis and is required for the normal barrier function of the skin. Required for normal water homeostasis and to prevent excessive water loss through the skin, probably via an indirect effect on the expression levels of other proteins, since CLDN1 itself seems to be dispensable for water barrier formation in keratinocyte tight junctions. The sequence is that of Claudin-1 (Cldn1) from Rattus norvegicus (Rat).